We begin with the raw amino-acid sequence, 303 residues long: MIERFSGEAGKRLRVEALTGQKLVGGDKGLAAELADMAELISVKAGDVIIQQDGTDNDLYFIITGAFDIVVNATPIRRRFPGDSVGEMAAVEPVQKRSATVSAAADSLVAKITEQQLSELGSRYPDIWRRMAKELSKRLIERNQFVNAKREKIRVFVISSAEALGVAHLLQSMFAHDKFLTVPWNQGVFKVANYTLDDIERELDQCDFAVAIAHGDDVTNARGTEWPAPRDNVVFELGLFMGRLGRKRAILMEPRGEGVKLPSDMAGVTTIPYVYDEKNDTEAKFGPAATALRKHIMSLGTIS.

22–138 contacts a nucleoside 3',5'-cyclic phosphate; it reads KLVGGDKGLA…RRMAKELSKR (117 aa). A TIR-like region spans residues 154–273; sequence RVFVISSAEA…DMAGVTTIPY (120 aa).

In terms of assembly, purified protein forms large 2-dimensional sheets when incubated with cUMP and shorter filaments in the presence of cCMP.

It localises to the cytoplasm. It carries out the reaction NAD(+) + H2O = ADP-D-ribose + nicotinamide + H(+). With respect to regulation, activated by cyclic UMP (cUMP) and to a lesser extent by cCMP. Pycsar (pyrimidine cyclase system for antiphage resistance) provides immunity against bacteriophage. The pyrimidine cyclase (PycC) synthesizes cyclic nucleotides in response to infection; these serve as specific second messenger signals. The signals activate the adjacent effector, leading to bacterial cell death and abortive phage infection. A clade B Pycsar system. Its function is as follows. The effector protein of a two-gene Pycsar system. Upon activation by cyclic UMP (cUMP) degrades cellular NAD(+). Expression of this and adjacent uridylate cyclase BcPycC (AC A0A0J5ZXG5) probably confers resistance to bacteriophage. The genes are probably only expressed in response to bacteriophage infection. This protein probably only responds to cUMP (produced by its cognate NTP cyclase). The chain is Pycsar effector protein BcPycTIR from Burkholderia cepacia (Pseudomonas cepacia).